The primary structure comprises 515 residues: Zinc-binding protein AdcA (515 aa).

A signal peptide spans 1 to 28 (MKKKILLMMSLISVFFAWQLTQAKQVLA). H66 lines the Zn(2+) pocket. The tract at residues 125 to 148 (DHHHEDADKKHEHNKHSEEGHNHA) is disordered. The his-rich loop stretch occupies residues 129–148 (EDADKKHEHNKHSEEGHNHA). Residues H152, H216, and E291 each coordinate Zn(2+).

This sequence belongs to the bacterial solute-binding protein 9 family.

In terms of biological role, part of the ATP-binding cassette (ABC) transport system AdcABC involved in zinc import. Binds zinc with high affinity and specificity and delivers it to the membrane permease for translocation into the cytoplasm. This chain is Zinc-binding protein AdcA (adcA), found in Streptococcus pyogenes serotype M1.